Consider the following 512-residue polypeptide: Glucose-6-phosphate 1-dehydrogenase (512 aa).

Residues Arg-61, 103–104 (EF), and Lys-171 contribute to the NADP(+) site. The substrate site is built by His-201, Lys-205, Glu-239, and Asp-258. His-263 functions as the Proton acceptor in the catalytic mechanism. Substrate is bound by residues Lys-360 and Lys-365. The interval 479–512 (QDSSPSFPNYPAGSSGPKEADALIERDGRSWRPL) is disordered. Basic and acidic residues predominate over residues 496 to 512 (KEADALIERDGRSWRPL).

It belongs to the glucose-6-phosphate dehydrogenase family.

It carries out the reaction D-glucose 6-phosphate + NADP(+) = 6-phospho-D-glucono-1,5-lactone + NADPH + H(+). It participates in carbohydrate degradation; pentose phosphate pathway; D-ribulose 5-phosphate from D-glucose 6-phosphate (oxidative stage): step 1/3. Its function is as follows. Catalyzes the oxidation of glucose 6-phosphate to 6-phosphogluconolactone. This chain is Glucose-6-phosphate 1-dehydrogenase, found in Chlamydia pneumoniae (Chlamydophila pneumoniae).